A 147-amino-acid polypeptide reads, in one-letter code: MTIKLHHLRPAPGAKSDKIRVGRGEGGKRGKTAGRGTKGTKARKNVPAAFEGGQMPLHMRLPKLKGFTNPFRTEYQVVNVGDIARLFPEGGQVTVEDLVAKGAVRKNQLVKVLGDGDLTVAVQVTVDKFTGSAKEKIAAAGGTATEL.

Positions 1 to 45 (MTIKLHHLRPAPGAKSDKIRVGRGEGGKRGKTAGRGTKGTKARKN) are disordered. Over residues 15 to 28 (KSDKIRVGRGEGGK) the composition is skewed to basic and acidic residues.

It belongs to the universal ribosomal protein uL15 family. As to quaternary structure, part of the 50S ribosomal subunit.

Its function is as follows. Binds to the 23S rRNA. The polypeptide is Large ribosomal subunit protein uL15 (Rhodococcus jostii (strain RHA1)).